The following is a 1516-amino-acid chain: Neurite extension and migration factor (1516 aa).

The span at 380-405 shows a compositional bias: basic and acidic residues; it reads LDKKKGKEEGQEDKGVEKKDGKDNGE. Disordered stretches follow at residues 380–440, 589–610, 1158–1225, 1373–1419, and 1437–1479; these read LDKK…GSFS, QKKKKQRNTNTDSIKTPFSQKQ, TFND…STKK, TPQE…PGYN, and LGNN…ESGT. 3 stretches are compositionally biased toward polar residues: residues 596–610, 1158–1170, and 1185–1194; these read NTNTDSIKTPFSQKQ, TFNDPSGQISTNN, and GAMNQSSSQK. Residues 1443–1453 are compositionally biased toward basic residues; sequence THKKLYRHKSS. The span at 1456-1479 shows a compositional bias: basic and acidic residues; sequence ALRDEKCKGKHMEREQVHKDESGT.

Highly expressed in fetal and adult brain, predominantly in the cerebral cortex and the cerebellum. Also expressed in other tissues but to a lesser extent.

The protein resides in the nucleus. Its subcellular location is the cytoplasm. Involved in neurite outgrowth by regulating cell-cell adhesion via the N-cadherin signaling pathway. May act by regulating expression of protein-coding genes, such as N-cadherins and integrin beta-1 (ITGB1). The polypeptide is Neurite extension and migration factor (Homo sapiens (Human)).